A 195-amino-acid chain; its full sequence is Cytochrome c biogenesis ATP-binding export protein CcmA (195 aa).

In terms of domain architecture, ABC transporter spans 1 to 195 (MLSLHQLQFN…IKSAQILQLV (195 aa)). 33–40 (GANGSGKS) is an ATP binding site.

It belongs to the ABC transporter superfamily. CcmA exporter (TC 3.A.1.107) family. In terms of assembly, the complex is composed of two ATP-binding proteins (CcmA) and two transmembrane proteins (CcmB).

The protein localises to the cell inner membrane. It catalyses the reaction heme b(in) + ATP + H2O = heme b(out) + ADP + phosphate + H(+). Part of the ABC transporter complex CcmAB involved in the biogenesis of c-type cytochromes; once thought to export heme, this seems not to be the case, but its exact role is uncertain. Responsible for energy coupling to the transport system. The sequence is that of Cytochrome c biogenesis ATP-binding export protein CcmA from Rickettsia felis (strain ATCC VR-1525 / URRWXCal2) (Rickettsia azadi).